The sequence spans 341 residues: Cell division protein FtsQ (341 aa).

Topologically, residues 1 to 126 (MTETDEGAPV…VARGVVRGLK (126 aa)) are cytoplasmic. Residues 127–147 (TLFATVMFSIAGFGLGLALYV) traverse the membrane as a helical segment. Topologically, residues 148–341 (TPAMSVRNIV…VSSPDLPTVK (194 aa)) are extracellular. The region spanning 151–219 (MSVRNIVVTG…SALRITIVER (69 aa)) is the POTRA domain.

Belongs to the FtsQ/DivIB family. FtsQ subfamily.

It localises to the cell membrane. Essential cell division protein. The polypeptide is Cell division protein FtsQ (Mycobacterium leprae (strain Br4923)).